Consider the following 435-residue polypeptide: Glutamate-1-semialdehyde 2,1-aminomutase (435 aa).

Lysine 270 is modified (N6-(pyridoxal phosphate)lysine).

Belongs to the class-III pyridoxal-phosphate-dependent aminotransferase family. HemL subfamily. As to quaternary structure, homodimer. The cofactor is pyridoxal 5'-phosphate.

Its subcellular location is the cytoplasm. The catalysed reaction is (S)-4-amino-5-oxopentanoate = 5-aminolevulinate. Its pathway is porphyrin-containing compound metabolism; protoporphyrin-IX biosynthesis; 5-aminolevulinate from L-glutamyl-tRNA(Glu): step 2/2. This chain is Glutamate-1-semialdehyde 2,1-aminomutase, found in Wigglesworthia glossinidia brevipalpis.